A 282-amino-acid polypeptide reads, in one-letter code: Probable endonuclease 4 (282 aa).

The Zn(2+) site is built by histidine 71, histidine 111, glutamate 147, aspartate 181, histidine 184, histidine 218, aspartate 231, histidine 233, and glutamate 263.

The protein belongs to the AP endonuclease 2 family. Zn(2+) serves as cofactor.

It carries out the reaction Endonucleolytic cleavage to 5'-phosphooligonucleotide end-products.. Functionally, endonuclease IV plays a role in DNA repair. It cleaves phosphodiester bonds at apurinic or apyrimidinic (AP) sites, generating a 3'-hydroxyl group and a 5'-terminal sugar phosphate. The sequence is that of Probable endonuclease 4 from Protochlamydia amoebophila (strain UWE25).